The chain runs to 177 residues: PLAC8-like protein 1 (177 aa).

The protein belongs to the cornifelin family.

The sequence is that of PLAC8-like protein 1 (Plac8l1) from Mus musculus (Mouse).